The following is a 232-amino-acid chain: Octanoyltransferase (232 aa).

Positions 32 to 219 constitute a BPL/LPL catalytic domain; it reads NIIYDTLILL…SFKVFNFSSY (188 aa). Substrate contacts are provided by residues 77 to 84, 140 to 142, and 153 to 155; these read RGGDITYH, AIG, and GFA. The active-site Acyl-thioester intermediate is Cys-171.

It belongs to the LipB family.

Its subcellular location is the cytoplasm. The enzyme catalyses octanoyl-[ACP] + L-lysyl-[protein] = N(6)-octanoyl-L-lysyl-[protein] + holo-[ACP] + H(+). It functions in the pathway protein modification; protein lipoylation via endogenous pathway; protein N(6)-(lipoyl)lysine from octanoyl-[acyl-carrier-protein]: step 1/2. Its function is as follows. Catalyzes the transfer of endogenously produced octanoic acid from octanoyl-acyl-carrier-protein onto the lipoyl domains of lipoate-dependent enzymes. Lipoyl-ACP can also act as a substrate although octanoyl-ACP is likely to be the physiological substrate. This Dictyoglomus turgidum (strain DSM 6724 / Z-1310) protein is Octanoyltransferase.